The sequence spans 140 residues: MDCKSPKRANICPHLPGGGLFSTPPSQAAWRTLLTALCFPGPTCTGPMREGPRAVYNPPRAHRNSSDNCVMKHLLCAGDKNGTRRHALPSPLEGSFQPGRQIPPPQTPSTDPQTLPLSFRSLLRCHQLCAASLPPSLKLP.

The tract at residues Lys-80–Leu-115 is disordered.

This is an uncharacterized protein from Homo sapiens (Human).